Consider the following 219-residue polypeptide: Ribose-5-phosphate isomerase A (219 aa).

Residues 28 to 31, 81 to 84, and 94 to 97 each bind substrate; these read TGST, DGAD, and KGGG. The active-site Proton acceptor is the E103. Residue K121 coordinates substrate.

Belongs to the ribose 5-phosphate isomerase family. As to quaternary structure, homodimer.

It carries out the reaction aldehydo-D-ribose 5-phosphate = D-ribulose 5-phosphate. Its pathway is carbohydrate degradation; pentose phosphate pathway; D-ribose 5-phosphate from D-ribulose 5-phosphate (non-oxidative stage): step 1/1. Functionally, catalyzes the reversible conversion of ribose-5-phosphate to ribulose 5-phosphate. The protein is Ribose-5-phosphate isomerase A of Pectobacterium atrosepticum (strain SCRI 1043 / ATCC BAA-672) (Erwinia carotovora subsp. atroseptica).